We begin with the raw amino-acid sequence, 148 residues long: Probable transporter PD_1893 (148 aa).

Transmembrane regions (helical) follow at residues 11 to 31, 48 to 68, 93 to 113, and 118 to 138; these read FTVA…SEMI, NPSL…GMAL, IVFG…CPGP, and LSTG…GMII.

It belongs to the TsuA/YedE (TC 9.B.102) family.

The protein resides in the cell inner membrane. The sequence is that of Probable transporter PD_1893 from Xylella fastidiosa (strain Temecula1 / ATCC 700964).